The primary structure comprises 413 residues: Arginine biosynthesis bifunctional protein ArgJ (413 aa).

Substrate is bound by residues T160, K186, T197, E284, N408, and S413. T197 acts as the Nucleophile in catalysis.

Belongs to the ArgJ family. In terms of assembly, heterotetramer of two alpha and two beta chains.

The protein localises to the cytoplasm. The catalysed reaction is N(2)-acetyl-L-ornithine + L-glutamate = N-acetyl-L-glutamate + L-ornithine. The enzyme catalyses L-glutamate + acetyl-CoA = N-acetyl-L-glutamate + CoA + H(+). Its pathway is amino-acid biosynthesis; L-arginine biosynthesis; L-ornithine and N-acetyl-L-glutamate from L-glutamate and N(2)-acetyl-L-ornithine (cyclic): step 1/1. The protein operates within amino-acid biosynthesis; L-arginine biosynthesis; N(2)-acetyl-L-ornithine from L-glutamate: step 1/4. Its function is as follows. Catalyzes two activities which are involved in the cyclic version of arginine biosynthesis: the synthesis of N-acetylglutamate from glutamate and acetyl-CoA as the acetyl donor, and of ornithine by transacetylation between N(2)-acetylornithine and glutamate. The polypeptide is Arginine biosynthesis bifunctional protein ArgJ (Burkholderia pseudomallei (strain 1710b)).